The following is a 118-amino-acid chain: Myotrophin (118 aa).

ANK repeat units lie at residues 1 to 30, 34 to 65, and 67 to 98; these read MGDKEFMWALKNGDLDAVKEFVAGGVDVNR, GGRKPLHYAADCGQDEIVEFLLAKGANINAAD, and HGITPLLSACYEGHRKCVELFVSKGADKNVKG.

It belongs to the myotrophin family.

Its subcellular location is the cytoplasm. The protein resides in the nucleus. It localises to the perinuclear region. In terms of biological role, regulates NF-kappa-B transcription factor activity. Promotes growth of cardiomyocytes, but not cardiomyocyte proliferation. Promotes cardiac muscle hypertrophy. Plays a role in the regulation of the growth of actin filaments. Inhibits the activity of the F-actin-capping protein complex. This Xenopus laevis (African clawed frog) protein is Myotrophin (mtpn).